Here is a 281-residue protein sequence, read N- to C-terminus: uncharacterized protein (281 aa).

Helical transmembrane passes span 30–50, 54–74, 76–96, 106–126, 153–173, 198–218, 235–255, and 259–279; these read AIVA…FIVI, VFIS…GYYF, FNPL…MGWV, TLIG…IDLT, AGLD…FLAI, IALT…IALL, MMAV…ALSY, and LSSG…SLAF.

It belongs to the ABC-3 integral membrane protein family.

The protein localises to the cell membrane. This is an uncharacterized protein from Synechocystis sp. (strain ATCC 27184 / PCC 6803 / Kazusa).